The following is a 268-amino-acid chain: Small ribosomal subunit protein uS3 (268 aa).

Residues 38–106 form the KH type-2 domain; the sequence is IRKLLATGME…QVQLNILEVK (69 aa). The segment at 217 to 268 is disordered; that stretch reads NTAAPAGDRPRRERPSRPRRSGATGTTATSTEAGRAATATADAPATEQNQEG. Low complexity predominate over residues 237-268; the sequence is SGATGTTATSTEAGRAATATADAPATEQNQEG.

Belongs to the universal ribosomal protein uS3 family. As to quaternary structure, part of the 30S ribosomal subunit. Forms a tight complex with proteins S10 and S14.

In terms of biological role, binds the lower part of the 30S subunit head. Binds mRNA in the 70S ribosome, positioning it for translation. This chain is Small ribosomal subunit protein uS3, found in Rhodococcus erythropolis (strain PR4 / NBRC 100887).